The following is a 459-amino-acid chain: MPEINVMERGRELVVNPLVTCQPFGAMFATLGIRRGLPLVHGSQGCSTFVRYGLNRHFREPAEIAVTSLHEDAAVFGGRSNIINGVKNLVKRFRPDLVGIVTTCSSEIIGDDVDGFMRVAETELREELGDRFQTKLVHISTPSFVENHFRGYGNAIKSFIETLSREDGDCNHKLNIIPGIVNPGDIREIGHMLGLMDITPIILTDTSDPFDSPLRPSKTEQMPFYPPGGTAVPEIEDSSNSMGTLSLTMYGDEALNTLEKRFRVPGEYSMPIGVRNTDDFVRRAARISEKDVSDELLDERGILIDSMADLSSRYLFGRTAAVYGDPDMVAGISRFLCELGITPLHTCTGTDNELFIDRMKTVAAEADERINVMVKSDLRALEERLSEEPVDLMIGNSDGRLIAQDLGIPLVRVGYPVYDRVGYQRVPITGYRGAVNLLNRITNTVLREYYEPQHWKLQQ.

Residues cysteine 21, cysteine 46, cysteine 104, and serine 143 each coordinate [8Fe-7S] cluster.

The protein belongs to the NifD/NifK/NifE/NifN family. In terms of assembly, tetramer of two alpha and two beta chains. Forms complex with the iron protein (nitrogenase component 2). It depends on [8Fe-7S] cluster as a cofactor.

It catalyses the reaction N2 + 8 reduced [2Fe-2S]-[ferredoxin] + 16 ATP + 16 H2O = H2 + 8 oxidized [2Fe-2S]-[ferredoxin] + 2 NH4(+) + 16 ADP + 16 phosphate + 6 H(+). In terms of biological role, this molybdenum-iron protein is part of the nitrogenase complex that catalyzes the key enzymatic reactions in nitrogen fixation. This chain is Nitrogenase molybdenum-iron protein beta chain (nifK), found in Methanothermobacter marburgensis (strain ATCC BAA-927 / DSM 2133 / JCM 14651 / NBRC 100331 / OCM 82 / Marburg) (Methanobacterium thermoautotrophicum).